The following is a 397-amino-acid chain: Acetate kinase (397 aa).

Mg(2+) is bound at residue asparagine 7. Position 14 (lysine 14) interacts with ATP. Arginine 90 serves as a coordination point for substrate. Aspartate 147 serves as the catalytic Proton donor/acceptor. ATP is bound by residues 207-211 (HLGNG), 282-284 (DFR), and 330-334 (GLGEN). Glutamate 383 lines the Mg(2+) pocket.

This sequence belongs to the acetokinase family. As to quaternary structure, homodimer. Requires Mg(2+) as cofactor. Mn(2+) serves as cofactor.

It localises to the cytoplasm. It catalyses the reaction acetate + ATP = acetyl phosphate + ADP. It participates in metabolic intermediate biosynthesis; acetyl-CoA biosynthesis; acetyl-CoA from acetate: step 1/2. Its function is as follows. Catalyzes the formation of acetyl phosphate from acetate and ATP. Can also catalyze the reverse reaction. This Clostridium botulinum (strain Loch Maree / Type A3) protein is Acetate kinase.